A 934-amino-acid chain; its full sequence is Replication factor C subunit 1 (934 aa).

The segment at 1–190 is disordered; sequence MSNSDIRSFF…RSSKSKGLPR (190 aa). Ser27 is modified (phosphoserine). A compositionally biased stretch (basic residues) spans 29–39; that stretch reads KPKRSLKKKRI. Positions 89 to 104 are enriched in polar residues; sequence GVSTTPDEYFEQQSTR. Residues 118–128 show a composition bias toward basic and acidic residues; it reads TTSKDVVHPVK. Low complexity predominate over residues 165-186; sequence TSKSKSHTTTATTHTSRSSKSK. The 91-residue stretch at 236–326 folds into the BRCT domain; it reads GNSDCLSGIS…PASGGTGAAA (91 aa). ATP is bound by residues Thr362, Cys374, 416-423, and Asn519; that span reads GPPGIGKT. Acidic residues predominate over residues 876–895; it reads AEDEMLEEASDSEAANEEDI. Positions 876 to 934 are disordered; sequence AEDEMLEEASDSEAANEEDIDLSKDKFISVPKKPKKRTKAKAEASSSSSTSRRSRKKTA.

Belongs to the activator 1 large subunit family. In terms of assembly, heteropentamer of subunits rfc1, rfc2, rfc3, rfc4 and rfc5 that forms a complex (RFC) with PCNA in the presence of ATP. Interacts with cdc24.

It is found in the nucleus. The protein localises to the nucleolus. Its function is as follows. The elongation of primed DNA templates by DNA polymerase delta and epsilon requires the action of the accessory proteins PCNA and activator 1. Subunit 1 is essential for cell cycle progression. It may associate with components of the DNA replication machinery and serve to enhance the efficiency of DNA replication. The chain is Replication factor C subunit 1 (rfc1) from Schizosaccharomyces pombe (strain 972 / ATCC 24843) (Fission yeast).